We begin with the raw amino-acid sequence, 419 residues long: Elongation factor Tu, chloroplastic (419 aa).

Residues 10–214 (KPHVNIGTIG…TVDEHIPTPK (205 aa)) enclose the tr-type G domain. The interval 19–26 (GHVDHGKT) is G1. 19 to 26 (GHVDHGKT) contacts GTP. A Mg(2+)-binding site is contributed by T26. Residues 60-64 (GITIN) are G2. The interval 81-84 (DCPG) is G3. GTP is bound by residues 81–85 (DCPGH) and 136–139 (NKAD). Positions 136 to 139 (NKAD) are G4. The G5 stretch occupies residues 174-176 (SAL).

Belongs to the TRAFAC class translation factor GTPase superfamily. Classic translation factor GTPase family. EF-Tu/EF-1A subfamily.

Its subcellular location is the plastid. The protein localises to the chloroplast. The catalysed reaction is GTP + H2O = GDP + phosphate + H(+). Its function is as follows. GTP hydrolase that promotes the GTP-dependent binding of aminoacyl-tRNA to the A-site of ribosomes during protein biosynthesis. The sequence is that of Elongation factor Tu, chloroplastic (tufA) from Stigeoclonium helveticum (Green alga).